Reading from the N-terminus, the 857-residue chain is DNA mismatch repair protein MutS (857 aa).

608-615 (GPNMSGKS) contacts ATP.

This sequence belongs to the DNA mismatch repair MutS family.

In terms of biological role, this protein is involved in the repair of mismatches in DNA. It is possible that it carries out the mismatch recognition step. This protein has a weak ATPase activity. The protein is DNA mismatch repair protein MutS of Lactobacillus johnsonii (strain CNCM I-12250 / La1 / NCC 533).